A 466-amino-acid polypeptide reads, in one-letter code: tRNA modification GTPase MnmE (466 aa).

(6S)-5-formyl-5,6,7,8-tetrahydrofolate-binding residues include R22, E87, and R126. Positions 222–382 (GWRTVIVGRP…LTELIRRMVY (161 aa)) constitute a TrmE-type G domain. Position 232 (N232) interacts with K(+). Residues 232-237 (NVGKSS), 251-257 (TEIPGTT), and 276-279 (DTAG) contribute to the GTP site. A Mg(2+)-binding site is contributed by S236. Positions 251, 253, and 256 each coordinate K(+). A Mg(2+)-binding site is contributed by T257. K466 serves as a coordination point for (6S)-5-formyl-5,6,7,8-tetrahydrofolate.

This sequence belongs to the TRAFAC class TrmE-Era-EngA-EngB-Septin-like GTPase superfamily. TrmE GTPase family. Homodimer. Heterotetramer of two MnmE and two MnmG subunits. K(+) serves as cofactor.

It is found in the cytoplasm. Its function is as follows. Exhibits a very high intrinsic GTPase hydrolysis rate. Involved in the addition of a carboxymethylaminomethyl (cmnm) group at the wobble position (U34) of certain tRNAs, forming tRNA-cmnm(5)s(2)U34. The polypeptide is tRNA modification GTPase MnmE (Heliobacterium modesticaldum (strain ATCC 51547 / Ice1)).